Consider the following 346-residue polypeptide: GTPase Obg (346 aa).

An Obg domain is found at 1–159 (MRFVDEVTFV…RELRLELQLL (159 aa)). The tract at residues 128–148 (LHFKSSTNRAPRQSTEGTAGE) is disordered. The span at 130 to 144 (FKSSTNRAPRQSTEG) shows a compositional bias: polar residues. An OBG-type G domain is found at 160–335 (ADVGLLGMPN…LCGDIMNDLE (176 aa)). GTP contacts are provided by residues 166 to 173 (GMPNVGKS), 191 to 195 (FTTLY), 213 to 216 (DIPG), 285 to 288 (NRLD), and 316 to 318 (SGL). Residues serine 173 and threonine 193 each coordinate Mg(2+).

The protein belongs to the TRAFAC class OBG-HflX-like GTPase superfamily. OBG GTPase family. As to quaternary structure, monomer. Requires Mg(2+) as cofactor.

The protein resides in the cytoplasm. In terms of biological role, an essential GTPase which binds GTP, GDP and possibly (p)ppGpp with moderate affinity, with high nucleotide exchange rates and a fairly low GTP hydrolysis rate. Plays a role in control of the cell cycle, stress response, ribosome biogenesis and in those bacteria that undergo differentiation, in morphogenesis control. The sequence is that of GTPase Obg from Halorhodospira halophila (strain DSM 244 / SL1) (Ectothiorhodospira halophila (strain DSM 244 / SL1)).